The primary structure comprises 1008 residues: Kinesin-like protein KIN-5C (1008 aa).

In terms of domain architecture, Kinesin motor spans 12-359 (NVQVLLRCRP…LDYAHRAKSI (348 aa)). 98–105 (GQTGTGKT) contributes to the ATP binding site. Residues 402-459 (KDRYQQEENERKAMADQIEQMTTSLEANQKQINDLQEKYDSELQHSADLSKKLEATEK) are a coiled coil. Disordered regions lie at residues 910 to 931 (VEAH…TAGI), 943 to 962 (YKDY…EVPS), and 975 to 1008 (ESLM…TINN). Residues 913–925 (HLGESQHLQESHS) show a composition bias toward basic and acidic residues. Basic and acidic residues predominate over residues 979 to 995 (DEFRENHPYEPSKDRRP).

It belongs to the TRAFAC class myosin-kinesin ATPase superfamily. Kinesin family. KIN-5/BimC subfamily.

The protein localises to the cytoplasm. The protein resides in the cytoskeleton. It localises to the spindle. Its function is as follows. Responsible for microtubule translocation. May be important for the organization of phragmoplast-specific arrays of microtubules. Plays an essential role in stabilizing the mitotic spindle. Required during mitotic cytokinesis. The chain is Kinesin-like protein KIN-5C from Oryza sativa subsp. japonica (Rice).